The primary structure comprises 87 residues: Cell division protein FtsL (87 aa).

The Cytoplasmic segment spans residues 1–3; the sequence is MSR. A helical membrane pass occupies residues 4–23; the sequence is LLLIVLLACSIASAIGVVYM. Over 24 to 87 the chain is Periplasmic; it reads RHMHRKLFVQ…ETSDIVVIRP (64 aa).

The protein belongs to the FtsL family. In terms of assembly, part of a complex composed of FtsB, FtsL and FtsQ.

It is found in the cell inner membrane. Its function is as follows. Essential cell division protein. May link together the upstream cell division proteins, which are predominantly cytoplasmic, with the downstream cell division proteins, which are predominantly periplasmic. This Xanthomonas campestris pv. campestris (strain ATCC 33913 / DSM 3586 / NCPPB 528 / LMG 568 / P 25) protein is Cell division protein FtsL.